A 447-amino-acid polypeptide reads, in one-letter code: N-succinylarginine dihydrolase (447 aa).

Substrate is bound by residues 19-28 (AGLSFGNEAS), N110, and 137-138 (HR). E174 is a catalytic residue. R212 contacts substrate. The active site involves H248. Substrate-binding residues include D250 and N359. Residue C365 is the Nucleophile of the active site.

Belongs to the succinylarginine dihydrolase family. As to quaternary structure, homodimer.

It carries out the reaction N(2)-succinyl-L-arginine + 2 H2O + 2 H(+) = N(2)-succinyl-L-ornithine + 2 NH4(+) + CO2. It functions in the pathway amino-acid degradation; L-arginine degradation via AST pathway; L-glutamate and succinate from L-arginine: step 2/5. In terms of biological role, catalyzes the hydrolysis of N(2)-succinylarginine into N(2)-succinylornithine, ammonia and CO(2). The polypeptide is N-succinylarginine dihydrolase (Salmonella agona (strain SL483)).